A 149-amino-acid polypeptide reads, in one-letter code: Transcriptional repressor NrdR (149 aa).

A zinc finger spans residues 3–34 (CPFCSATDTKVIDSRLVSDGHQVRRRRQCLAC). In terms of domain architecture, ATP-cone spans 49–139 (PKVIKSNGNR…VYRSFEDIKE (91 aa)).

This sequence belongs to the NrdR family. Zn(2+) is required as a cofactor.

In terms of biological role, negatively regulates transcription of bacterial ribonucleotide reductase nrd genes and operons by binding to NrdR-boxes. The protein is Transcriptional repressor NrdR of Aliivibrio salmonicida (strain LFI1238) (Vibrio salmonicida (strain LFI1238)).